Here is a 664-residue protein sequence, read N- to C-terminus: Transketolase 1 (664 aa).

His26 is a binding site for substrate. Thiamine diphosphate-binding positions include His66 and 114-116 (GPL). Position 155 (Asp155) interacts with Mg(2+). Thiamine diphosphate is bound by residues Gly156 and Asn185. Mg(2+) contacts are provided by Asn185 and Ile187. Substrate contacts are provided by His260, Arg357, and Ser384. His260 serves as a coordination point for thiamine diphosphate. Glu411 functions as the Proton donor in the catalytic mechanism. A thiamine diphosphate-binding site is contributed by Phe437. His461, Asp469, and Arg520 together coordinate substrate.

It belongs to the transketolase family. In terms of assembly, homodimer. Mg(2+) serves as cofactor. Ca(2+) is required as a cofactor. Requires Mn(2+) as cofactor. The cofactor is Co(2+). It depends on thiamine diphosphate as a cofactor.

It catalyses the reaction D-sedoheptulose 7-phosphate + D-glyceraldehyde 3-phosphate = aldehydo-D-ribose 5-phosphate + D-xylulose 5-phosphate. Its function is as follows. Catalyzes the transfer of a two-carbon ketol group from a ketose donor to an aldose acceptor, via a covalent intermediate with the cofactor thiamine pyrophosphate. This chain is Transketolase 1 (tkt1), found in Vibrio vulnificus (strain YJ016).